Reading from the N-terminus, the 432-residue chain is Dihydroorotase (432 aa).

His60 and His62 together coordinate Zn(2+). Substrate-binding positions include 62-64 (HLR) and Asn94. Residues Asp152, His179, and His232 each coordinate Zn(2+). Position 278 (Asn278) interacts with substrate. Asp305 is a binding site for Zn(2+). Residue Asp305 is part of the active site. Residues His309 and 323-324 (FG) each bind substrate.

It belongs to the metallo-dependent hydrolases superfamily. DHOase family. Class I DHOase subfamily. Zn(2+) is required as a cofactor.

The enzyme catalyses (S)-dihydroorotate + H2O = N-carbamoyl-L-aspartate + H(+). The protein operates within pyrimidine metabolism; UMP biosynthesis via de novo pathway; (S)-dihydroorotate from bicarbonate: step 3/3. In terms of biological role, catalyzes the reversible cyclization of carbamoyl aspartate to dihydroorotate. In Elusimicrobium minutum (strain Pei191), this protein is Dihydroorotase.